The sequence spans 379 residues: tRNA-specific 2-thiouridylase MnmA (379 aa).

ATP-binding positions include Ala-23–Ser-30 and Leu-49. Catalysis depends on Cys-117, which acts as the Nucleophile. Cys-117 and Cys-214 form a disulfide bridge. Gly-141 serves as a coordination point for ATP. The segment at Arg-163–Gln-165 is interaction with tRNA. The active-site Cysteine persulfide intermediate is Cys-214.

Belongs to the MnmA/TRMU family.

It localises to the cytoplasm. It carries out the reaction S-sulfanyl-L-cysteinyl-[protein] + uridine(34) in tRNA + AH2 + ATP = 2-thiouridine(34) in tRNA + L-cysteinyl-[protein] + A + AMP + diphosphate + H(+). In terms of biological role, catalyzes the 2-thiolation of uridine at the wobble position (U34) of tRNA, leading to the formation of s(2)U34. This Cereibacter sphaeroides (strain KD131 / KCTC 12085) (Rhodobacter sphaeroides) protein is tRNA-specific 2-thiouridylase MnmA.